The sequence spans 282 residues: Undecaprenyl-diphosphatase 1 (282 aa).

Transmembrane regions (helical) follow at residues 1–21 (MLLL…VLPL), 46–66 (GVAL…LYFW), 91–111 (AFLV…LAHF), 117–137 (SPGL…LGVI), 150–170 (MGGI…LPGV), 193–213 (FSML…GLDL), 226–246 (LIAA…MMAW), and 260–280 (VLLG…APFL).

This sequence belongs to the UppP family.

The protein localises to the cell inner membrane. It carries out the reaction di-trans,octa-cis-undecaprenyl diphosphate + H2O = di-trans,octa-cis-undecaprenyl phosphate + phosphate + H(+). In terms of biological role, catalyzes the dephosphorylation of undecaprenyl diphosphate (UPP). Confers resistance to bacitracin. The protein is Undecaprenyl-diphosphatase 1 of Rhodospirillum rubrum (strain ATCC 11170 / ATH 1.1.1 / DSM 467 / LMG 4362 / NCIMB 8255 / S1).